Reading from the N-terminus, the 152-residue chain is Ribosomal RNA large subunit methyltransferase H (152 aa).

Residues leucine 68, glycine 100, and 119–124 (LGVMTW) each bind S-adenosyl-L-methionine.

The protein belongs to the RNA methyltransferase RlmH family. As to quaternary structure, homodimer.

The protein localises to the cytoplasm. It carries out the reaction pseudouridine(1915) in 23S rRNA + S-adenosyl-L-methionine = N(3)-methylpseudouridine(1915) in 23S rRNA + S-adenosyl-L-homocysteine + H(+). Its function is as follows. Specifically methylates the pseudouridine at position 1915 (m3Psi1915) in 23S rRNA. This chain is Ribosomal RNA large subunit methyltransferase H, found in Rhodospirillum rubrum (strain ATCC 11170 / ATH 1.1.1 / DSM 467 / LMG 4362 / NCIMB 8255 / S1).